A 212-amino-acid polypeptide reads, in one-letter code: NAD(P)H-hydrate epimerase (212 aa).

The 202-residue stretch at 11-212 (MRHYDSYTIN…ANDMGTYAVD (202 aa)) folds into the YjeF N-terminal domain. Residue 60 to 64 (NNGGD) coordinates (6S)-NADPHX. Positions 61 and 123 each coordinate K(+). (6S)-NADPHX-binding positions include 127 to 133 (GIGIDRA), Tyr-138, and Asp-156. Residue Ser-159 coordinates K(+).

Belongs to the NnrE/AIBP family. K(+) serves as cofactor.

It carries out the reaction (6R)-NADHX = (6S)-NADHX. The catalysed reaction is (6R)-NADPHX = (6S)-NADPHX. Functionally, catalyzes the epimerization of the S- and R-forms of NAD(P)HX, a damaged form of NAD(P)H that is a result of enzymatic or heat-dependent hydration. This is a prerequisite for the S-specific NAD(P)H-hydrate dehydratase to allow the repair of both epimers of NAD(P)HX. The polypeptide is NAD(P)H-hydrate epimerase (Limosilactobacillus reuteri (strain ATCC 55730 / SD2112) (Lactobacillus reuteri)).